A 30-amino-acid chain; its full sequence is Cycloviolacin-O5 (30 aa).

A cross-link (cyclopeptide (Gly-Asn)) is located at residues 1–30 (GTPCGESCVWIPCISSAVGCSCKNKVCYKN). Cystine bridges form between C4/C20, C8/C22, and C13/C27.

This is a cyclic peptide.

Functionally, probably participates in a plant defense mechanism. This chain is Cycloviolacin-O5, found in Viola odorata (Sweet violet).